An 81-amino-acid polypeptide reads, in one-letter code: Small ribosomal subunit protein bS16 (81 aa).

This sequence belongs to the bacterial ribosomal protein bS16 family.

This Lachnospira eligens (strain ATCC 27750 / DSM 3376 / VPI C15-48 / C15-B4) (Eubacterium eligens) protein is Small ribosomal subunit protein bS16.